The following is a 95-amino-acid chain: Small ribosomal subunit protein bS16 (95 aa).

It belongs to the bacterial ribosomal protein bS16 family.

The polypeptide is Small ribosomal subunit protein bS16 (Mycoplasma genitalium (strain ATCC 33530 / DSM 19775 / NCTC 10195 / G37) (Mycoplasmoides genitalium)).